We begin with the raw amino-acid sequence, 348 residues long: Probable mitochondrial adenine nucleotide transporter BTL1 (348 aa).

Solcar repeat units follow at residues 46–129 (SREA…VKRA), 157–241 (SWIS…MKTS), and 251–338 (LSRP…WKDI). Helical transmembrane passes span 52-72 (FLSG…LETI), 104-124 (GNEI…GTFE), 156-176 (ISWI…STLV), 213-233 (FYAG…CYYF), 256-276 (MLVL…PLEV), and 321-341 (VMPS…ILLA).

The protein belongs to the mitochondrial carrier (TC 2.A.29) family.

It is found in the mitochondrion inner membrane. Probable mitochondrial adenylate carrier that catalyzes the transport of ATP, ADP and AMP. The protein is Probable mitochondrial adenine nucleotide transporter BTL1 of Arabidopsis thaliana (Mouse-ear cress).